A 250-amino-acid polypeptide reads, in one-letter code: Ubiquinone/menaquinone biosynthesis C-methyltransferase UbiE (250 aa).

S-adenosyl-L-methionine contacts are provided by residues Thr73, Asp94, and 122-123 (DA).

It belongs to the class I-like SAM-binding methyltransferase superfamily. MenG/UbiE family.

It carries out the reaction a 2-demethylmenaquinol + S-adenosyl-L-methionine = a menaquinol + S-adenosyl-L-homocysteine + H(+). It catalyses the reaction a 2-methoxy-6-(all-trans-polyprenyl)benzene-1,4-diol + S-adenosyl-L-methionine = a 5-methoxy-2-methyl-3-(all-trans-polyprenyl)benzene-1,4-diol + S-adenosyl-L-homocysteine + H(+). Its pathway is quinol/quinone metabolism; menaquinone biosynthesis; menaquinol from 1,4-dihydroxy-2-naphthoate: step 2/2. It participates in cofactor biosynthesis; ubiquinone biosynthesis. Methyltransferase required for the conversion of demethylmenaquinol (DMKH2) to menaquinol (MKH2) and the conversion of 2-polyprenyl-6-methoxy-1,4-benzoquinol (DDMQH2) to 2-polyprenyl-3-methyl-6-methoxy-1,4-benzoquinol (DMQH2). The chain is Ubiquinone/menaquinone biosynthesis C-methyltransferase UbiE from Coxiella burnetii (strain CbuK_Q154) (Coxiella burnetii (strain Q154)).